The sequence spans 550 residues: MANSQRSSSLIDPRNGFCTSNSTFYSKRKPLALPSKESLDITTFISSQTYRGKTAFIDAATDHRISFSDLWMAVDRVADCLLHDVGIRRGDVVLVLSPNTISIPIVCLSVMSLGAVLTTANPLNTASEILRQIADSNPKLAFTTPELAPKIASSGISIVLERVEDTLRVPRGLKVVGNLTEMMKKEPSGQAVRNQVHKDDTAMLLYSSGTTGRSKGVNSSHGNLIAHVARYIAEPFEQPQQTFICTVPLFHTFGLLNFVLATLALGTTVVILPRFDLGEMMAAVEKYRATTLILVPPVLVTMINKADQIMKKYDVSFLRTVRCGGAPLSKEVTQGFMKKYPTVDVYQGYALTESNGAGASIESVEESRRYGAVGLLSCGVEARIVDPNTGQVMGLNQTGELWLKGPSIAKGYFRNEEEIITSEGWLKTGDLCYIDNDGFLFIVDRLKELIKYKGYQVPPAELEALLLNHPDILDAAVIPFPDKEAGQFPMAYVARKPESNLCEKKVIDFISKQVAPYKKIRKVAFIDSIPKTPSGKTLRKDLIKFAISKI.

Serine 207, serine 208, glycine 209, threonine 210, threonine 211, and lysine 215 together coordinate ATP. Phenylalanine 253 lines the (E)-4-coumaroyl-AMP pocket. Arginine 274 provides a ligand contact to CoA. The tract at residues 276-347 is SBD1; it reads DLGEMMAAVE…KKYPTVDVYQ (72 aa). (E)-4-coumaroyl-AMP-binding residues include glycine 325, glutamine 347, glycine 348, and threonine 352. Glutamine 347, glycine 348, threonine 352, aspartate 430, and arginine 445 together coordinate ATP. The interval 348-412 is SBD2; that stretch reads GYALTESNGA…LKGPSIAKGY (65 aa). 2 residues coordinate (E)-4-coumaroyl-AMP: lysine 447 and lysine 451. CoA is bound by residues lysine 453 and glycine 454. Lysine 536 lines the ATP pocket. A Microbody targeting signal motif is present at residues 548 to 550; the sequence is SKI.

Belongs to the ATP-dependent AMP-binding enzyme family. Mg(2+) is required as a cofactor.

The protein localises to the peroxisome. It catalyses the reaction (E)-4-coumarate + ATP + CoA = (E)-4-coumaroyl-CoA + AMP + diphosphate. The enzyme catalyses (E)-4-coumarate + ATP + H(+) = (E)-4-coumaroyl-AMP + diphosphate. The catalysed reaction is (E)-4-coumaroyl-AMP + CoA = (E)-4-coumaroyl-CoA + AMP + H(+). Its function is as follows. Carboxylate--CoA ligase that may use 4-coumarate as substrate. Follows a two-step reaction mechanism, wherein the carboxylate substrate first undergoes adenylation by ATP, followed by a thioesterification in the presence of CoA to yield the final CoA thioester. The sequence is that of 4-coumarate--CoA ligase-like 8 from Arabidopsis thaliana (Mouse-ear cress).